Reading from the N-terminus, the 394-residue chain is Elongation factor Tu (394 aa).

A tr-type G domain is found at 10–204 (KEHVNVGTIG…AVDTYIENPV (195 aa)). Residues 19–26 (GHVDHGKT) are G1. 19–26 (GHVDHGKT) lines the GTP pocket. T26 is a Mg(2+) binding site. Residues 60–64 (GITIN) are G2. The tract at residues 81–84 (DCPG) is G3. GTP-binding positions include 81-85 (DCPGH) and 136-139 (NKCD). Residues 136–139 (NKCD) are G4. The G5 stretch occupies residues 174-176 (SAL).

The protein belongs to the TRAFAC class translation factor GTPase superfamily. Classic translation factor GTPase family. EF-Tu/EF-1A subfamily. In terms of assembly, monomer.

The protein resides in the cytoplasm. The enzyme catalyses GTP + H2O = GDP + phosphate + H(+). In terms of biological role, GTP hydrolase that promotes the GTP-dependent binding of aminoacyl-tRNA to the A-site of ribosomes during protein biosynthesis. This Mycoplasmopsis synoviae (strain 53) (Mycoplasma synoviae) protein is Elongation factor Tu.